Here is a 265-residue protein sequence, read N- to C-terminus: 3-methyl-2-oxobutanoate hydroxymethyltransferase (265 aa).

Positions 41 and 80 each coordinate Mg(2+). Residues 41–42 (DS), D80, and K109 contribute to the 3-methyl-2-oxobutanoate site. Residue E111 participates in Mg(2+) binding. The active-site Proton acceptor is E178.

Belongs to the PanB family. Homodecamer; pentamer of dimers. It depends on Mg(2+) as a cofactor.

The protein localises to the cytoplasm. The catalysed reaction is 3-methyl-2-oxobutanoate + (6R)-5,10-methylene-5,6,7,8-tetrahydrofolate + H2O = 2-dehydropantoate + (6S)-5,6,7,8-tetrahydrofolate. It participates in cofactor biosynthesis; (R)-pantothenate biosynthesis; (R)-pantoate from 3-methyl-2-oxobutanoate: step 1/2. In terms of biological role, catalyzes the reversible reaction in which hydroxymethyl group from 5,10-methylenetetrahydrofolate is transferred onto alpha-ketoisovalerate to form ketopantoate. The chain is 3-methyl-2-oxobutanoate hydroxymethyltransferase from Thermosipho africanus (strain TCF52B).